Consider the following 477-residue polypeptide: Cytochrome P450 716A1 (477 aa).

The chain crosses the membrane as a helical span at residues 2 to 22 (YMAIMIILFLSSILLSLLLLL). A heme-binding site is contributed by C424.

Belongs to the cytochrome P450 family. Requires heme as cofactor.

The protein resides in the membrane. Functionally, possesses triterpene oxidizing activity. Catalyzes the C28 hydroxylation of alpha-amyrin, beta-amyrin, and lupeol, producing uvaol, erythrodiol, and betulin, respectively. Catalyzes the C28 carboxylation of alpha- and beta-amyrin. The sequence is that of Cytochrome P450 716A1 from Arabidopsis thaliana (Mouse-ear cress).